Here is a 343-residue protein sequence, read N- to C-terminus: Ribosomal RNA small subunit methyltransferase C (343 aa).

The protein belongs to the methyltransferase superfamily. RsmC family. As to quaternary structure, monomer.

The protein localises to the cytoplasm. The catalysed reaction is guanosine(1207) in 16S rRNA + S-adenosyl-L-methionine = N(2)-methylguanosine(1207) in 16S rRNA + S-adenosyl-L-homocysteine + H(+). Functionally, specifically methylates the guanine in position 1207 of 16S rRNA in the 30S particle. In Escherichia fergusonii (strain ATCC 35469 / DSM 13698 / CCUG 18766 / IAM 14443 / JCM 21226 / LMG 7866 / NBRC 102419 / NCTC 12128 / CDC 0568-73), this protein is Ribosomal RNA small subunit methyltransferase C.